The primary structure comprises 232 residues: Ornithine carbamoyltransferase (232 aa).

Residues Q15, R39, and 66 to 69 each bind carbamoyl phosphate; that span reads HPTQ. L-ornithine-binding positions include N99, D163, and 167–168; that span reads SM. Carbamoyl phosphate-binding positions include 204–207 and T232; that span reads HCLP.

The protein belongs to the aspartate/ornithine carbamoyltransferase superfamily. OTCase family.

It is found in the cytoplasm. It catalyses the reaction carbamoyl phosphate + L-ornithine = L-citrulline + phosphate + H(+). The protein operates within amino-acid biosynthesis; L-arginine biosynthesis; L-arginine from L-ornithine and carbamoyl phosphate: step 1/3. Functionally, reversibly catalyzes the transfer of the carbamoyl group from carbamoyl phosphate (CP) to the N(epsilon) atom of ornithine (ORN) to produce L-citrulline. The chain is Ornithine carbamoyltransferase (argF) from Neisseria pharyngis.